The following is a 681-amino-acid chain: Probable L-type lectin-domain containing receptor kinase S.7 (681 aa).

A signal peptide spans 1–21 (MSLSRKLLVIFFTWITALSMS). Over 22 to 305 (KPIFVSSDNM…PSKKRRHRHN (284 aa)) the chain is Extracellular. Residues 30 to 265 (NMNFTFKSFT…IHLIENWSFK (236 aa)) are legume-lectin like. N-linked (GlcNAc...) asparagine glycosylation is found at Asn-32, Asn-42, Asn-86, Asn-121, Asn-135, Asn-261, and Asn-281. A helical membrane pass occupies residues 306–326 (LAIGLGISCPVLICLALFVFG). The Cytoplasmic portion of the chain corresponds to 327–681 (YFTLKKWKSV…EGDSIVYVVS (355 aa)). A Protein kinase domain is found at 365-643 (FHSSRVIGRG…RVLQILNNEI (279 aa)). ATP is bound by residues 371 to 379 (IGRGAFGNV) and Lys-394. The Proton acceptor role is filled by Asp-493.

This sequence in the C-terminal section; belongs to the protein kinase superfamily. Ser/Thr protein kinase family. In the N-terminal section; belongs to the leguminous lectin family.

The protein localises to the cell membrane. The enzyme catalyses L-seryl-[protein] + ATP = O-phospho-L-seryl-[protein] + ADP + H(+). It carries out the reaction L-threonyl-[protein] + ATP = O-phospho-L-threonyl-[protein] + ADP + H(+). Functionally, involved in resistance response to the pathogenic oomycetes Phytophthora infestans and Phytophthora capsici. This chain is Probable L-type lectin-domain containing receptor kinase S.7, found in Arabidopsis thaliana (Mouse-ear cress).